A 187-amino-acid polypeptide reads, in one-letter code: Elongation factor P (187 aa).

The protein belongs to the elongation factor P family.

The protein resides in the cytoplasm. The protein operates within protein biosynthesis; polypeptide chain elongation. Involved in peptide bond synthesis. Stimulates efficient translation and peptide-bond synthesis on native or reconstituted 70S ribosomes in vitro. Probably functions indirectly by altering the affinity of the ribosome for aminoacyl-tRNA, thus increasing their reactivity as acceptors for peptidyl transferase. This is Elongation factor P from Parafrankia sp. (strain EAN1pec).